The sequence spans 181 residues: Probable calcium-binding protein CML16 (181 aa).

A disordered region spans residues 1 to 24 (MSNTTEKKMPQQQQVERPTALAPA). EF-hand domains are found at residues 23-58 (PADAEIERVFTRFDADGDGRISPSELAAVTRAIAPP), 63-98 (AGGREVAAMMNELDTDRDGFVDLGEFAAFHGRGRGD), 100-135 (EHEAELRAAFDVYDVDGDGRITAAELGKVLGRIGEG), and 136-171 (CSAEECERMIASVDVDGDGCVGFEEFKKMMCRDAAA). Ca(2+) contacts are provided by D36, D38, D40, R42, E47, D76, D78, D80, E87, D113, D115, D117, R119, E124, D149, D151, D153, C155, and E160.

Its function is as follows. Potential calcium sensor. The chain is Probable calcium-binding protein CML16 (CML16) from Oryza sativa subsp. japonica (Rice).